A 373-amino-acid polypeptide reads, in one-letter code: Velvet complex subunit RYP3 (373 aa).

Basic and acidic residues predominate over residues 1 to 10 (MYTLKQDRPH). Disordered regions lie at residues 1–26 (MYTL…LQHG) and 344–373 (RKDG…ENEG). The Velvet domain maps to 48–344 (VYEGRIYSLD…AFQGIKIPIR (297 aa)). Over residues 364-373 (GEGEDWENEG) the composition is skewed to acidic residues.

The protein belongs to the velvet family. VelB subfamily. In terms of assembly, component of the heterotrimeric velvet complex composed of LAE1, VEL1 and VEL2; VEL1A acting as a bridging protein between LAE1 and VEL2. Forms a heterodimeric complex with VOS1; the formation of the VEL2-VOS1 complex is light-dependent.

The protein localises to the nucleus. It is found in the cytoplasm. Its function is as follows. Component of the velvet transcription factor complex that controls sexual/asexual developmental ratio in response to light, promoting sexual development in the darkness while stimulating asexual sporulation under illumination. The velvet complex acts as a global regulator for secondary metabolite gene expression. Component of the RYP2-RYP3 heterodimeric complex that plays a dual role in activating genes associated with spore maturation and repressing certain development-associated genes. The complex binds DNA through the DNA-binding domain of RYP2 that recognizes an 11-nucleotide consensus sequence 5'-CTGGCCGCGGC-3' consisting of two motifs in the promoters of key developmental regulatory genes. Required for viable spore production and regulation of sporulation in response to temperature, as well as for the switch to yeast-form in the presence of host cells. In Ajellomyces capsulatus (Darling's disease fungus), this protein is Velvet complex subunit RYP3 (RYP3).